The following is a 50-amino-acid chain: Large ribosomal subunit protein eL39 (50 aa).

Belongs to the eukaryotic ribosomal protein eL39 family. In terms of assembly, part of the 50S ribosomal subunit. Interacts weakly with protein L23.

Functionally, binds to the 23S rRNA. Forms part of the polypeptide exit tunnel. The protein is Large ribosomal subunit protein eL39 (rpl39e) of Haloarcula marismortui (strain ATCC 43049 / DSM 3752 / JCM 8966 / VKM B-1809) (Halobacterium marismortui).